We begin with the raw amino-acid sequence, 396 residues long: tRNA-specific 2-thiouridylase MnmA (396 aa).

Residues 35 to 42 (GLSGGVDS) and Leu-61 each bind ATP. Catalysis depends on Cys-122, which acts as the Nucleophile. Cysteines 122 and 221 form a disulfide. Gly-147 provides a ligand contact to ATP. Residues 171–173 (KDQ) are interaction with tRNA. Cys-221 (cysteine persulfide intermediate) is an active-site residue. The interval 326 to 327 (RY) is interaction with tRNA.

It belongs to the MnmA/TRMU family.

The protein resides in the cytoplasm. The catalysed reaction is S-sulfanyl-L-cysteinyl-[protein] + uridine(34) in tRNA + AH2 + ATP = 2-thiouridine(34) in tRNA + L-cysteinyl-[protein] + A + AMP + diphosphate + H(+). Functionally, catalyzes the 2-thiolation of uridine at the wobble position (U34) of tRNA, leading to the formation of s(2)U34. The sequence is that of tRNA-specific 2-thiouridylase MnmA from Parasynechococcus marenigrum (strain WH8102).